We begin with the raw amino-acid sequence, 226 residues long: Exosome complex component rrp46 (226 aa).

Residues 205–226 (NESDGHENEKNPKEDVEMDVVA) are disordered. Residues 207 to 219 (SDGHENEKNPKED) show a composition bias toward basic and acidic residues.

This sequence belongs to the RNase PH family. Component of the RNA exosome complex. Specifically part of the catalytically inactive RNA exosome core complex (Exo-9) which may associate with the catalytic subunits rrp6 and dis3 in cytoplasmic- and nuclear-specific RNA exosome complex forms. Exo-9 is formed by a hexameric base ring of RNase PH domain-containing subunits and a cap ring consisting of csl4, rrp4 and rrp40.

Its subcellular location is the cytoplasm. The protein resides in the nucleus. It is found in the nucleolus. Non-catalytic component of the RNA exosome complex which has 3'-&gt;5' exoribonuclease activity and participates in a multitude of cellular RNA processing and degradation events. In the nucleus, the RNA exosome complex is involved in proper maturation of stable RNA species such as rRNA, snRNA and snoRNA, in the elimination of RNA processing by-products and non-coding 'pervasive' transcripts, such as antisense RNA species and cryptic unstable transcripts (CUTs), and of mRNAs with processing defects, thereby limiting or excluding their export to the cytoplasm. In the cytoplasm, the RNA exosome complex is involved in general mRNA turnover and in RNA surveillance pathways, preventing translation of aberrant mRNAs. The catalytic inactive RNA exosome core complex of 9 subunits (Exo-9) is proposed to play a pivotal role in the binding and presentation of RNA for ribonucleolysis, and to serve as a scaffold for the association with catalytic subunits and accessory proteins or complexes. ski6 is part of the hexameric ring of RNase PH domain-containing subunits proposed to form a central channel which threads RNA substrates for degradation. The sequence is that of Exosome complex component rrp46 (rrp46) from Schizosaccharomyces pombe (strain 972 / ATCC 24843) (Fission yeast).